Reading from the N-terminus, the 189-residue chain is Notch ligand osm-11 (189 aa).

An N-terminal signal peptide occupies residues Met1–Ala18.

As to quaternary structure, may interact with lin-12/Notch receptor. Expressed in coelomocytes (at protein level).

The protein localises to the apical cell membrane. Probable secreted lin-12/Notch ligand or co-ligand involved in the mediation of Notch signaling. Involved in the lin-12/Notch pathway signaling of cell fate in vulval precursor cells (VPCs), acting redundantly with dsl-1 and lag-2. Required for normal octanol avoidance response, acting via both lin-12/Notch and glp-1/Notch signaling pathways in neurons, in concert with lag-2. Involved in regulation of sleep-like quiescence during the larval to adult transition, acting via Notch receptor activation and in parallel with EGF signaling. The sequence is that of Notch ligand osm-11 from Caenorhabditis elegans.